Here is a 343-residue protein sequence, read N- to C-terminus: Hydroxymethylglutaryl-CoA synthase (343 aa).

Asp28 and Ala29 together coordinate (3S)-3-hydroxy-3-methylglutaryl-CoA. The active-site Proton donor/acceptor is Glu80. Position 112 (Cys112) interacts with (3S)-3-hydroxy-3-methylglutaryl-CoA. Residue Cys112 is the Acyl-thioester intermediate of the active site. CoA is bound at residue Arg198. Residues Thr200 and His233 each contribute to the (3S)-3-hydroxy-3-methylglutaryl-CoA site. The Proton donor/acceptor role is filled by His233. Lys238 serves as a coordination point for CoA. The (3S)-3-hydroxy-3-methylglutaryl-CoA site is built by Arg242, Asn265, and Ser295.

This sequence belongs to the thiolase-like superfamily. Archaeal HMG-CoA synthase family. As to quaternary structure, interacts with acetoacetyl-CoA thiolase that catalyzes the precedent step in the pathway and with a DUF35 protein. The acetoacetyl-CoA thiolase/HMG-CoA synthase complex channels the intermediate via a fused CoA-binding site, which allows for efficient coupling of the endergonic thiolase reaction with the exergonic HMGCS reaction.

The enzyme catalyses acetoacetyl-CoA + acetyl-CoA + H2O = (3S)-3-hydroxy-3-methylglutaryl-CoA + CoA + H(+). The protein operates within metabolic intermediate biosynthesis; (R)-mevalonate biosynthesis; (R)-mevalonate from acetyl-CoA: step 2/3. In terms of biological role, catalyzes the condensation of acetyl-CoA with acetoacetyl-CoA to form 3-hydroxy-3-methylglutaryl-CoA (HMG-CoA). Functions in the mevalonate (MVA) pathway leading to isopentenyl diphosphate (IPP), a key precursor for the biosynthesis of isoprenoid compounds that are building blocks of archaeal membrane lipids. The protein is Hydroxymethylglutaryl-CoA synthase of Archaeoglobus fulgidus (strain ATCC 49558 / DSM 4304 / JCM 9628 / NBRC 100126 / VC-16).